We begin with the raw amino-acid sequence, 56 residues long: Small ribosomal subunit protein bS21 (56 aa).

It belongs to the bacterial ribosomal protein bS21 family.

This Dictyoglomus thermophilum (strain ATCC 35947 / DSM 3960 / H-6-12) protein is Small ribosomal subunit protein bS21.